The following is a 309-amino-acid chain: Palmitoyltransferase ZDHHC19 (309 aa).

A run of 2 helical transmembrane segments spans residues leucine 29–proline 49 and tryptophan 59–leucine 79. A DHHC domain is found at glutamine 112–leucine 162. The S-palmitoyl cysteine intermediate role is filled by cysteine 142. The next 2 membrane-spanning stretches (helical) occupy residues leucine 160–valine 180 and isoleucine 193–leucine 213. Pro residues predominate over residues leucine 280–proline 294. The disordered stretch occupies residues leucine 280–tryptophan 309.

It belongs to the DHHC palmitoyltransferase family.

Its subcellular location is the golgi apparatus membrane. The protein resides in the cytoplasm. The protein localises to the perinuclear region. The enzyme catalyses L-cysteinyl-[protein] + hexadecanoyl-CoA = S-hexadecanoyl-L-cysteinyl-[protein] + CoA. Palmitoyltransferase that mediates palmitoylation oproteins, such as RRAS and SQSTM1. Catalyzes palmitoylation of RRAS, leading to increased cell viability. Acts as a positive regulator of autophagy by mediating palmitoylation of SQSTM1, promoting affinity between SQSTM1 and ATG8 proteins and recruitment of ubiquitinated cargo proteins to autophagosomes. In terms of biological role, (Microbial infection) Promotes Chikungunya virus (CHIKV) replication by mediating viral nsp1 palmitoylation. In Homo sapiens (Human), this protein is Palmitoyltransferase ZDHHC19.